Here is a 559-residue protein sequence, read N- to C-terminus: Sulfite reductase [NADPH] hemoprotein beta-component (559 aa).

Residues Cys-423, Cys-429, Cys-468, and Cys-472 each contribute to the [4Fe-4S] cluster site. Cys-472 contacts siroheme.

This sequence belongs to the nitrite and sulfite reductase 4Fe-4S domain family. Alpha(8)-beta(8). The alpha component is a flavoprotein, the beta component is a hemoprotein. It depends on siroheme as a cofactor. Requires [4Fe-4S] cluster as cofactor.

The enzyme catalyses hydrogen sulfide + 3 NADP(+) + 3 H2O = sulfite + 3 NADPH + 4 H(+). Its pathway is sulfur metabolism; hydrogen sulfide biosynthesis; hydrogen sulfide from sulfite (NADPH route): step 1/1. Functionally, component of the sulfite reductase complex that catalyzes the 6-electron reduction of sulfite to sulfide. This is one of several activities required for the biosynthesis of L-cysteine from sulfate. The sequence is that of Sulfite reductase [NADPH] hemoprotein beta-component from Thiocapsa roseopersicina.